The chain runs to 663 residues: Bifunctional polymyxin resistance protein ArnA (663 aa).

The interval 1–304 (MKAVVFAYHD…ELGLVAGMRL (304 aa)) is formyltransferase ArnAFT. The active-site Proton donor; for formyltransferase activity is His104. (6R)-10-formyltetrahydrofolate contacts are provided by residues Arg114 and 136 to 140 (TMRPD). The dehydrogenase ArnADH stretch occupies residues 316–663 (RLTRVLILGV…GAVSTGVEHD (348 aa)). Residues Asp349 and 370–371 (DI) each bind NAD(+). Residues Ala395, Tyr400, and 434-435 (TS) each bind UDP-alpha-D-glucuronate. The Proton acceptor; for decarboxylase activity role is filled by Glu436. UDP-alpha-D-glucuronate is bound by residues Arg462, Asn494, 528-537 (QLVDGGAQKR), and Tyr615. Arg621 functions as the Proton donor; for decarboxylase activity in the catalytic mechanism.

It in the N-terminal section; belongs to the Fmt family. UDP-L-Ara4N formyltransferase subfamily. In the C-terminal section; belongs to the NAD(P)-dependent epimerase/dehydratase family. UDP-glucuronic acid decarboxylase subfamily. Homohexamer, formed by a dimer of trimers.

It catalyses the reaction UDP-alpha-D-glucuronate + NAD(+) = UDP-beta-L-threo-pentopyranos-4-ulose + CO2 + NADH. The enzyme catalyses UDP-4-amino-4-deoxy-beta-L-arabinose + (6R)-10-formyltetrahydrofolate = UDP-4-deoxy-4-formamido-beta-L-arabinose + (6S)-5,6,7,8-tetrahydrofolate + H(+). It functions in the pathway nucleotide-sugar biosynthesis; UDP-4-deoxy-4-formamido-beta-L-arabinose biosynthesis; UDP-4-deoxy-4-formamido-beta-L-arabinose from UDP-alpha-D-glucuronate: step 1/3. The protein operates within nucleotide-sugar biosynthesis; UDP-4-deoxy-4-formamido-beta-L-arabinose biosynthesis; UDP-4-deoxy-4-formamido-beta-L-arabinose from UDP-alpha-D-glucuronate: step 3/3. It participates in bacterial outer membrane biogenesis; lipopolysaccharide biosynthesis. Functionally, bifunctional enzyme that catalyzes the oxidative decarboxylation of UDP-glucuronic acid (UDP-GlcUA) to UDP-4-keto-arabinose (UDP-Ara4O) and the addition of a formyl group to UDP-4-amino-4-deoxy-L-arabinose (UDP-L-Ara4N) to form UDP-L-4-formamido-arabinose (UDP-L-Ara4FN). The modified arabinose is attached to lipid A and is required for resistance to polymyxin and cationic antimicrobial peptides. This is Bifunctional polymyxin resistance protein ArnA from Aeromonas salmonicida (strain A449).